Here is a 121-residue protein sequence, read N- to C-terminus: Natriuretic peptides B (121 aa).

The signal sequence occupies residues 1–26; it reads MDLLKVLSQMILFLLFLYLSPLGGHS. A disordered region spans residues 61–89; that stretch reads LKDQGLTKEHPKRVLRSQGSTLRVQQRPQ. Over residues 77 to 89 the composition is skewed to polar residues; that stretch reads SQGSTLRVQQRPQ. Cys-99 and Cys-115 form a disulfide bridge.

The protein belongs to the natriuretic peptide family. Post-translationally, the precursor molecule is proteolytically cleaved by the endoprotease Furin to produce brain natriuretic peptide 45. May undergo further proteolytic cleavage by various proteases such as DPP4, MME and possibly FAP, to give rise to a variety of shorter peptides. May be cleaved at Ser-91 by the prolyl endopeptidase FAP (seprase) activity (in vitro). May be degraded by IDE. During IDE degradation, the resulting products initially increase the activation of NPR1 and can also stimulate NPR2 to produce cGMP before the fragments are completely degraded and inactivated by IDE (in vitro). In terms of tissue distribution, expressed abundantly in the ventricle, and in a lesser extent in the atrium (at protein level).

It is found in the secreted. In terms of biological role, cardiac hormone that plays a key role in mediating cardio-renal homeostasis. May also function as a paracrine antifibrotic factor in the heart. Acts by specifically binding and stimulating NPR1 to produce cGMP, which in turn activates effector proteins that drive various biological responses. Likely involved in regulating the extracellular fluid volume and maintaining the fluid-electrolyte balance through natriuresis, diuresis, kaluresis and chloruresis. In Mus musculus (Mouse), this protein is Natriuretic peptides B (Nppb).